The sequence spans 509 residues: Glucose-1-phosphate adenylyltransferase large subunit 4, chloroplastic/amyloplastic (509 aa).

Residues 1–36 constitute a chloroplast transit peptide; it reads MATCSWAATTAAAAPPRPPARCRSRVAALRRTAAAS.

This sequence belongs to the bacterial/plant glucose-1-phosphate adenylyltransferase family. Heterotetramer composed of two small and two large subunits. Expressed in leaves and stems.

It localises to the plastid. The protein resides in the chloroplast. It catalyses the reaction alpha-D-glucose 1-phosphate + ATP + H(+) = ADP-alpha-D-glucose + diphosphate. The protein operates within glycan biosynthesis; starch biosynthesis. With respect to regulation, activated by 3'phosphoglycerate, inhibited by orthophosphate. Allosteric regulation. Functionally, involved in synthesis of starch. Catalyzes the synthesis of ADP-glucose, a molecule that serves as an activated glycosyl donor for alpha-1,4-glucan synthesis. Essential for starch synthesis in leaf chloroplasts. This Oryza sativa subsp. japonica (Rice) protein is Glucose-1-phosphate adenylyltransferase large subunit 4, chloroplastic/amyloplastic.